We begin with the raw amino-acid sequence, 64 residues long: Large ribosomal subunit protein bL35 (64 aa).

Belongs to the bacterial ribosomal protein bL35 family.

The sequence is that of Large ribosomal subunit protein bL35 from Micrococcus luteus (strain ATCC 4698 / DSM 20030 / JCM 1464 / CCM 169 / CCUG 5858 / IAM 1056 / NBRC 3333 / NCIMB 9278 / NCTC 2665 / VKM Ac-2230) (Micrococcus lysodeikticus).